The sequence spans 224 residues: Octanoyltransferase (224 aa).

The region spanning 45–223 (PSNKQAVWML…SLNKRFGLLW (179 aa)) is the BPL/LPL catalytic domain. Substrate is bound by residues 87 to 94 (RGGDVTHH), 154 to 156 (SIG), and 167 to 169 (GIA). Cysteine 185 functions as the Acyl-thioester intermediate in the catalytic mechanism.

The protein belongs to the LipB family.

It is found in the cytoplasm. It carries out the reaction octanoyl-[ACP] + L-lysyl-[protein] = N(6)-octanoyl-L-lysyl-[protein] + holo-[ACP] + H(+). The protein operates within protein modification; protein lipoylation via endogenous pathway; protein N(6)-(lipoyl)lysine from octanoyl-[acyl-carrier-protein]: step 1/2. Functionally, catalyzes the transfer of endogenously produced octanoic acid from octanoyl-acyl-carrier-protein onto the lipoyl domains of lipoate-dependent enzymes. Lipoyl-ACP can also act as a substrate although octanoyl-ACP is likely to be the physiological substrate. The polypeptide is Octanoyltransferase (Prochlorococcus marinus (strain SARG / CCMP1375 / SS120)).